A 278-amino-acid chain; its full sequence is 4-deoxy-L-threo-5-hexosulose-uronate ketol-isomerase (278 aa).

Residues His-196, His-198, Glu-203, and His-245 each coordinate Zn(2+).

This sequence belongs to the KduI family. As to quaternary structure, homohexamer. Requires Zn(2+) as cofactor.

It carries out the reaction 5-dehydro-4-deoxy-D-glucuronate = 3-deoxy-D-glycero-2,5-hexodiulosonate. The protein operates within glycan metabolism; pectin degradation; 2-dehydro-3-deoxy-D-gluconate from pectin: step 4/5. In terms of biological role, catalyzes the isomerization of 5-dehydro-4-deoxy-D-glucuronate to 3-deoxy-D-glycero-2,5-hexodiulosonate. The chain is 4-deoxy-L-threo-5-hexosulose-uronate ketol-isomerase from Escherichia coli (strain SMS-3-5 / SECEC).